Consider the following 366-residue polypeptide: 3-isopropylmalate dehydrogenase (366 aa).

Residue 76–89 (GPKWDANPSHLRPE) participates in NAD(+) binding. Substrate-binding residues include Arg-96, Arg-106, Arg-134, and Asp-219. Asp-219, Asp-243, and Asp-247 together coordinate Mg(2+). Residue 277–289 (GSAPDIAGKGIAN) participates in NAD(+) binding.

This sequence belongs to the isocitrate and isopropylmalate dehydrogenases family. LeuB type 1 subfamily. As to quaternary structure, homodimer. Requires Mg(2+) as cofactor. Mn(2+) is required as a cofactor.

The protein localises to the cytoplasm. The catalysed reaction is (2R,3S)-3-isopropylmalate + NAD(+) = 4-methyl-2-oxopentanoate + CO2 + NADH. The protein operates within amino-acid biosynthesis; L-leucine biosynthesis; L-leucine from 3-methyl-2-oxobutanoate: step 3/4. Catalyzes the oxidation of 3-carboxy-2-hydroxy-4-methylpentanoate (3-isopropylmalate) to 3-carboxy-4-methyl-2-oxopentanoate. The product decarboxylates to 4-methyl-2 oxopentanoate. This is 3-isopropylmalate dehydrogenase from Oceanobacillus iheyensis (strain DSM 14371 / CIP 107618 / JCM 11309 / KCTC 3954 / HTE831).